Consider the following 194-residue polypeptide: Type II restriction enzyme OkrAI (194 aa).

Residues E71, D86, and W100 each contribute to the Mg(2+) site. E101 acts as the Proton acceptor in catalysis.

As to quaternary structure, homodimer. Mg(2+) is required as a cofactor.

The enzyme catalyses Endonucleolytic cleavage of DNA to give specific double-stranded fragments with terminal 5'-phosphates.. In terms of biological role, a P subtype restriction enzyme that recognizes the double-stranded sequence 5'-GGATCC-3' and cleaves after G-1. The chain is Type II restriction enzyme OkrAI from Oceanobacter kriegii (Oceanospirillum kriegii).